The primary structure comprises 280 residues: Pyrethroid hydrolase (280 aa).

Catalysis depends on charge relay system residues aspartate 202 and histidine 230. The interval 254-280 is disordered; the sequence is YRQTATKAGPDRPAGADGGRADRADLP.

It belongs to the AB hydrolase superfamily. Monomer.

It carries out the reaction (-)-trans-permethrin + H2O = (3-phenoxyphenyl)methanol + (1S,3R)-3-(2,2-dichlorovinyl)-2,2-dimethylcyclopropanecarboxylate + H(+). In terms of biological role, catalyzes the hydrolysis of pyrethroids pesticides. Catalyzes the hydrolysis of cypermethrin to equimolar amounts of cyano-3-phenoxybenzyl alcohol and 2,2-dimethyl-3-(2,2-dichlorovinyl)-cyclopropanecarboxylic acid. Hydrolyzes cis-permethrin at approximately equal rate to trans-permethrin. The protein is Pyrethroid hydrolase (pytH) of Sphingobium wenxiniae (strain DSM 21828 / CGMCC 1.7748 / JZ-1).